The chain runs to 153 residues: Membrane protein FAM174B (153 aa).

The first 27 residues, 1 to 27 (MSALPPQPPPPLLLLLLALLAAPAALA), serve as a signal peptide directing secretion. At 28–84 (RRAESASASQPEAEHQPPPGPGNATQLGSGMAGGGSSNSSVDAVVTRISSLLRDLPT) the chain is on the extracellular side. Positions 31 to 67 (ESASASQPEAEHQPPPGPGNATQLGSGMAGGGSSNSS) are disordered. The N-linked (GlcNAc...) asparagine glycan is linked to N50. The helical transmembrane segment at 85 to 105 (LKATVIVACAFSALLIACLLL) threads the bilayer. The Cytoplasmic segment spans residues 106-153 (RVFRLGKRLKKTRKYDIITTPAERVEMAPLNEEDDEDEDSTVFDIKYR).

The protein belongs to the FAM174 family.

It localises to the cell membrane. The protein resides in the golgi apparatus. Essential for Golgi structural integrity. This chain is Membrane protein FAM174B (Fam174b), found in Mus musculus (Mouse).